The chain runs to 153 residues: Ribosome maturation factor RimP (153 aa).

It belongs to the RimP family.

The protein resides in the cytoplasm. Functionally, required for maturation of 30S ribosomal subunits. This is Ribosome maturation factor RimP from Psychromonas ingrahamii (strain DSM 17664 / CCUG 51855 / 37).